A 695-amino-acid chain; its full sequence is Elongation factor G (695 aa).

Residues 8 to 282 (EKTRNIGIMA…AVLDYLPAPT (275 aa)) enclose the tr-type G domain. GTP-binding positions include 17-24 (AHIDAGKT), 81-85 (DTPGH), and 135-138 (NKMD).

The protein belongs to the TRAFAC class translation factor GTPase superfamily. Classic translation factor GTPase family. EF-G/EF-2 subfamily.

The protein resides in the cytoplasm. In terms of biological role, catalyzes the GTP-dependent ribosomal translocation step during translation elongation. During this step, the ribosome changes from the pre-translocational (PRE) to the post-translocational (POST) state as the newly formed A-site-bound peptidyl-tRNA and P-site-bound deacylated tRNA move to the P and E sites, respectively. Catalyzes the coordinated movement of the two tRNA molecules, the mRNA and conformational changes in the ribosome. This is Elongation factor G from Listeria monocytogenes serotype 4b (strain CLIP80459).